We begin with the raw amino-acid sequence, 131 residues long: Large ribosomal subunit protein bL19 (131 aa).

Belongs to the bacterial ribosomal protein bL19 family.

In terms of biological role, this protein is located at the 30S-50S ribosomal subunit interface and may play a role in the structure and function of the aminoacyl-tRNA binding site. This is Large ribosomal subunit protein bL19 from Rhodopseudomonas palustris (strain BisB18).